A 109-amino-acid chain; its full sequence is Large ribosomal subunit protein uL22 (109 aa).

It belongs to the universal ribosomal protein uL22 family. In terms of assembly, part of the 50S ribosomal subunit.

Functionally, this protein binds specifically to 23S rRNA; its binding is stimulated by other ribosomal proteins, e.g. L4, L17, and L20. It is important during the early stages of 50S assembly. It makes multiple contacts with different domains of the 23S rRNA in the assembled 50S subunit and ribosome. Its function is as follows. The globular domain of the protein is located near the polypeptide exit tunnel on the outside of the subunit, while an extended beta-hairpin is found that lines the wall of the exit tunnel in the center of the 70S ribosome. This chain is Large ribosomal subunit protein uL22, found in Wolinella succinogenes (strain ATCC 29543 / DSM 1740 / CCUG 13145 / JCM 31913 / LMG 7466 / NCTC 11488 / FDC 602W) (Vibrio succinogenes).